A 247-amino-acid chain; its full sequence is MSEATTTLDGWYCLHDLRSIDWAAWKTLSSDERGQAVSEFLNVVEKWNDVAAAKKGSHAMYTVVGQKADIMLMILRPTMEELNEIETELNKTTLAEYMVPAYSYVSVVELSNYLPADEDPYQNPQILARLYPELPKANHICFYPMDKRRQGDDNWYMLPMEERKKMMYSHSKIGRQYAGKVRQVISGSVGFDDFEWGVTLFADDILQFKKLIYEMRFDEVSARYGEFGTFFVGNILPDEKVEKFLHI.

Fe-coproporphyrin III-binding positions include Arg-129, 143–147 (YPMDK), His-170, Gln-183, and Ser-221. Tyr-143 is a catalytic residue.

Belongs to the ChdC family. Type 1 subfamily. Requires Fe-coproporphyrin III as cofactor.

It carries out the reaction Fe-coproporphyrin III + 2 H2O2 + 2 H(+) = heme b + 2 CO2 + 4 H2O. The catalysed reaction is Fe-coproporphyrin III + H2O2 + H(+) = harderoheme III + CO2 + 2 H2O. The enzyme catalyses harderoheme III + H2O2 + H(+) = heme b + CO2 + 2 H2O. Its pathway is porphyrin-containing compound metabolism; protoheme biosynthesis. Functionally, involved in coproporphyrin-dependent heme b biosynthesis. Catalyzes the decarboxylation of Fe-coproporphyrin III (coproheme) to heme b (protoheme IX), the last step of the pathway. The reaction occurs in a stepwise manner with a three-propionate intermediate. The protein is Coproheme decarboxylase of Bacillus cereus (strain AH820).